The following is a 238-amino-acid chain: Ribitol-5-phosphate cytidylyltransferase 1 (238 aa).

CTP contacts are provided by residues 7–10 (LAGG) and 81–87 (GSDRNDT).

It belongs to the IspD/TarI cytidylyltransferase family. TarI subfamily.

The enzyme catalyses D-ribitol 5-phosphate + CTP + H(+) = CDP-L-ribitol + diphosphate. It participates in cell wall biogenesis; poly(ribitol phosphate) teichoic acid biosynthesis. Its function is as follows. Catalyzes the transfer of the cytidylyl group of CTP to D-ribitol 5-phosphate. The protein is Ribitol-5-phosphate cytidylyltransferase 1 of Staphylococcus aureus (strain USA300).